Here is a 240-residue protein sequence, read N- to C-terminus: 1-(5-phosphoribosyl)-5-[(5-phosphoribosylamino)methylideneamino] imidazole-4-carboxamide isomerase (240 aa).

The active-site Proton acceptor is the Asp-8. Asp-129 functions as the Proton donor in the catalytic mechanism.

Belongs to the HisA/HisF family.

It localises to the cytoplasm. The enzyme catalyses 1-(5-phospho-beta-D-ribosyl)-5-[(5-phospho-beta-D-ribosylamino)methylideneamino]imidazole-4-carboxamide = 5-[(5-phospho-1-deoxy-D-ribulos-1-ylimino)methylamino]-1-(5-phospho-beta-D-ribosyl)imidazole-4-carboxamide. Its pathway is amino-acid biosynthesis; L-histidine biosynthesis; L-histidine from 5-phospho-alpha-D-ribose 1-diphosphate: step 4/9. The chain is 1-(5-phosphoribosyl)-5-[(5-phosphoribosylamino)methylideneamino] imidazole-4-carboxamide isomerase from Listeria monocytogenes serotype 4b (strain F2365).